Reading from the N-terminus, the 374-residue chain is LRR repeats and ubiquitin-like domain-containing protein At2g30105 (374 aa).

Positions 13-87 constitute a Ubiquitin-like domain; the sequence is IKLTVKFGGK…LMLMASQGLH (75 aa). LRR repeat units follow at residues 128 to 151, 152 to 175, 177 to 200, 201 to 224, 225 to 248, 250 to 270, 272 to 293, 294 to 316, and 318 to 340; these read WKATGVIALAQANLKEIPEEVWDC, GSGVRVLDISENFIKEVPAKISSF, SMQKLFLQGNGLSDESIQWEGIAS, LKRLMLLSISHNNLTVLPSAMGSL, TSLRQLDVTNNKLTSLPNELGLLT, LEILKANNNRITSLPESIGNC, FLMEVDLSANIISELPETFTKL, RNLKTLELNNTGLKTLPSALFKM, and LQLSTLGLHNTEITVEFLRQFEG.

The chain is LRR repeats and ubiquitin-like domain-containing protein At2g30105 from Arabidopsis thaliana (Mouse-ear cress).